A 453-amino-acid chain; its full sequence is Phosphoglucosamine mutase (453 aa).

The Phosphoserine intermediate role is filled by serine 108. Residues serine 108, aspartate 247, aspartate 249, and aspartate 251 each contribute to the Mg(2+) site. Phosphoserine is present on serine 108.

It belongs to the phosphohexose mutase family. Mg(2+) is required as a cofactor. In terms of processing, activated by phosphorylation.

It catalyses the reaction alpha-D-glucosamine 1-phosphate = D-glucosamine 6-phosphate. Catalyzes the conversion of glucosamine-6-phosphate to glucosamine-1-phosphate. The protein is Phosphoglucosamine mutase of Methylobacillus flagellatus (strain ATCC 51484 / DSM 6875 / VKM B-1610 / KT).